We begin with the raw amino-acid sequence, 229 residues long: Thiamine import ATP-binding protein ThiQ (229 aa).

Residues L2–M229 form the ABC transporter domain. G32–S39 contacts ATP.

The protein belongs to the ABC transporter superfamily. Thiamine importer (TC 3.A.1.19.1) family. In terms of assembly, the complex is composed of two ATP-binding proteins (ThiQ), two transmembrane proteins (ThiP) and a solute-binding protein (ThiB).

It is found in the cell inner membrane. The enzyme catalyses thiamine(out) + ATP + H2O = thiamine(in) + ADP + phosphate + H(+). Part of the ABC transporter complex ThiBPQ involved in thiamine import. Responsible for energy coupling to the transport system. This chain is Thiamine import ATP-binding protein ThiQ, found in Jannaschia sp. (strain CCS1).